The primary structure comprises 576 residues: QVTLTESGPALVKPKQPLTLTCTFSGFSLSTSRMRVSWIRRPPGKALEWLARIDDDDKFYWSTSLRTRLSISKNDSKNQVVLIMINVNPVDTATYYCARVVNSVMAGYYYYYMDVWGKGTTVTVSSGSASAPTLFPLVSCENSNPSSTVAVGCLAQDFLPDSITFSWKYNQSQKISSTRGFPSVLRGGKYAATSQVLLPSKDVMQGTDEHVCKWVQHPNGNKQKNVPLPVIAELPPKVSVFVPPRDGFFGNPRKSKLICQATGFSPRQVWSLREGKQVGSGVTTDQVQAEAKESGPTTYKVTSTLTIKESDWLGESMFTCRVDHRGLTFQQNASSMCVPDQDTAIRVFAIPPSFASIFLTKSTKLTCLVTDLTTYDSVTISWTREENGAVKTHTNISESHPNATFSAVGEASICEDDDWSGERFTCTVTHTDLPSPLKQTISRPKGVALHRPDVYLLPPAREQLNLRESATITCLVTGFSPADVFVQWMQRGEPLSPEKYVTSAPMPEPQAPGRYFAHSILTVSEEEWNTGQTYTCVVAHEALPNRVTERTVDKSTGKPTLYNVSLVMSDTAGTCY.

Position 1 is a pyrrolidone carboxylic acid (Gln-1). 5 Ig-like domains span residues 1–97 (QVTL…TYYC), 132–212 (PTLF…EHVC), 236–334 (PKVS…QNAS), 352–442 (PSFA…QTIS), and 452–553 (PDVY…RTVD). Residues 1–124 (QVTLTESGPA…VWGKGTTVTV (124 aa)) form a variable (V) domain, involved in antigen recognition region. 3 disulfide bridges follow: Cys-22–Cys-97, Cys-153–Cys-212, and Cys-259–Cys-320. Asn-74 and Asn-170 each carry an N-linked (GlcNAc...) asparagine glycan. Positions 125–576 (SSGSASAPTL…VMSDTAGTCY (452 aa)) are constant (C) domain. Residues Asn-332, Asn-395, and Asn-402 are each glycosylated (N-linked (GlcNAc...) asparagine). Intrachain disulfides connect Cys-367–Cys-426 and Cys-474–Cys-536. Asn-563 carries an N-linked (GlcNAc...) asparagine glycan.

In terms of assembly, immunoglobulins are composed of two identical heavy chains and two identical light chains; disulfide-linked. It is found almost exclusively as a homopentamer in the serum. Membrane-bound IgM molecules are non-covalently associated with heterodimer of CD79A and CD79B.

The protein localises to the secreted. It localises to the cell membrane. Functionally, immunoglobulins, also known as antibodies, are membrane-bound or secreted glycoproteins produced by B lymphocytes. In the recognition phase of humoral immunity, the membrane-bound immunoglobulins serve as receptors which, upon binding of a specific antigen, trigger the clonal expansion and differentiation of B lymphocytes into immunoglobulins-secreting plasma cells. Secreted immunoglobulins mediate the effector phase of humoral immunity, which results in the elimination of bound antigens. The antigen binding site is formed by the variable domain of one heavy chain, together with that of its associated light chain. Thus, each immunoglobulin has two antigen binding sites with remarkable affinity for a particular antigen. The variable domains are assembled by a process called V-(D)-J rearrangement and can then be subjected to somatic hypermutations which, after exposure to antigen and selection, allow affinity maturation for a particular antigen. IgM antibodies play an important role in primary defense mechanisms. They have been shown to be involved in early recognition of external invaders like bacteria and viruses, cellular waste and modified self, as well as in recognition and elimination of precancerous and cancerous lesions. The membrane-bound form is found in the majority of normal B cells alongside with IgD. Membrane-bound IgM induces the phosphorylation of CD79A and CD79B by the Src family of protein tyrosine kinases. It may cause death of cells by apoptosis. It is also found in soluble form, which represents about 30% of the total serum immunoglobulins where it is found almost exclusively as a homopentamer. After the antigen binds to the B cell receptor, the secreted form is secreted in large amounts (, PubMed:16895553). The protein is Immunoglobulin mu heavy chain of Homo sapiens (Human).